The chain runs to 484 residues: Glutamyl-tRNA(Gln) amidotransferase subunit A (484 aa).

Residues lysine 76 and serine 151 each act as charge relay system in the active site. The active-site Acyl-ester intermediate is serine 175.

Belongs to the amidase family. GatA subfamily. As to quaternary structure, heterotrimer of A, B and C subunits.

The catalysed reaction is L-glutamyl-tRNA(Gln) + L-glutamine + ATP + H2O = L-glutaminyl-tRNA(Gln) + L-glutamate + ADP + phosphate + H(+). Its function is as follows. Allows the formation of correctly charged Gln-tRNA(Gln) through the transamidation of misacylated Glu-tRNA(Gln) in organisms which lack glutaminyl-tRNA synthetase. The reaction takes place in the presence of glutamine and ATP through an activated gamma-phospho-Glu-tRNA(Gln). This is Glutamyl-tRNA(Gln) amidotransferase subunit A from Saccharophagus degradans (strain 2-40 / ATCC 43961 / DSM 17024).